The chain runs to 247 residues: Carboxy-S-adenosyl-L-methionine synthase (247 aa).

Residues Y39, 64–66 (GCS), 89–90 (DN), 117–118 (DI), N132, and R199 each bind S-adenosyl-L-methionine.

This sequence belongs to the class I-like SAM-binding methyltransferase superfamily. Cx-SAM synthase family. In terms of assembly, homodimer.

The enzyme catalyses prephenate + S-adenosyl-L-methionine = carboxy-S-adenosyl-L-methionine + 3-phenylpyruvate + H2O. Catalyzes the conversion of S-adenosyl-L-methionine (SAM) to carboxy-S-adenosyl-L-methionine (Cx-SAM). The chain is Carboxy-S-adenosyl-L-methionine synthase from Pectobacterium atrosepticum (strain SCRI 1043 / ATCC BAA-672) (Erwinia carotovora subsp. atroseptica).